Consider the following 259-residue polypeptide: Phosphate import ATP-binding protein PstB 1 (259 aa).

An ABC transporter domain is found at 13-254; that stretch reads IQVRGLEFFY…PSKTQTEDYI (242 aa). 45–52 contributes to the ATP binding site; the sequence is GPSGCGKS.

The protein belongs to the ABC transporter superfamily. Phosphate importer (TC 3.A.1.7) family. The complex is composed of two ATP-binding proteins (PstB), two transmembrane proteins (PstC and PstA) and a solute-binding protein (PstS).

Its subcellular location is the cell inner membrane. It catalyses the reaction phosphate(out) + ATP + H2O = ADP + 2 phosphate(in) + H(+). In terms of biological role, part of the ABC transporter complex PstSACB involved in phosphate import. Responsible for energy coupling to the transport system. The protein is Phosphate import ATP-binding protein PstB 1 of Pseudomonas syringae pv. tomato (strain ATCC BAA-871 / DC3000).